The sequence spans 511 residues: Kinesin-like protein 8 (511 aa).

One can recognise a Kinesin motor domain in the interval 5–356; it reads NVRVIVRVRP…LRYSEAARRI (352 aa). Position 107–114 (107–114) interacts with ATP; that stretch reads GQKGTGKT. Residues Ser-278, Ser-279, Ser-284, and Ser-456 each carry the phosphoserine modification. Residues 373-489 adopt a coiled-coil conformation; the sequence is EGELDDILTT…KLVKSQLHDY (117 aa).

The protein belongs to the TRAFAC class myosin-kinesin ATPase superfamily. Kinesin family.

It localises to the cytoplasm. It is found in the cytoskeleton. This is Kinesin-like protein 8 (klp8) from Schizosaccharomyces pombe (strain 972 / ATCC 24843) (Fission yeast).